The chain runs to 203 residues: MKLLHVDGSILGPHSVSRTVSAAIVDRLRAQHPGLDVIYRDLAGTPLPHLSGAVLAGAQPNATNTPDVQHDVELGRQVLEEFLAAEIVVIGAPLYNFTLSSQLKAWIDRILVAGVTFRYGPSGAEGLAGGKRVIAVVSRGGLYGPGTPAAAAEHAETYLRTVLAFIGITAPEVIVAEGIALGPEARERALAGALDAAAALKAA.

FMN-binding positions include Ser9, 15 to 17 (SVS), and 138 to 141 (SRGG).

This sequence belongs to the azoreductase type 1 family. In terms of assembly, homodimer. FMN is required as a cofactor.

The catalysed reaction is 2 a quinone + NADH + H(+) = 2 a 1,4-benzosemiquinone + NAD(+). It carries out the reaction N,N-dimethyl-1,4-phenylenediamine + anthranilate + 2 NAD(+) = 2-(4-dimethylaminophenyl)diazenylbenzoate + 2 NADH + 2 H(+). Quinone reductase that provides resistance to thiol-specific stress caused by electrophilic quinones. In terms of biological role, also exhibits azoreductase activity. Catalyzes the reductive cleavage of the azo bond in aromatic azo compounds to the corresponding amines. In Methylorubrum extorquens (strain PA1) (Methylobacterium extorquens), this protein is FMN-dependent NADH:quinone oxidoreductase.